Here is a 178-residue protein sequence, read N- to C-terminus: Large ribosomal subunit protein uL6 (178 aa).

Belongs to the universal ribosomal protein uL6 family. Part of the 50S ribosomal subunit.

This protein binds to the 23S rRNA, and is important in its secondary structure. It is located near the subunit interface in the base of the L7/L12 stalk, and near the tRNA binding site of the peptidyltransferase center. This Helicobacter pylori (strain G27) protein is Large ribosomal subunit protein uL6.